Reading from the N-terminus, the 155-residue chain is uncharacterized protein (155 aa).

One can recognise an N-acetyltransferase domain in the interval 6-155 (LRIELGEETN…RDMVRLYLDL (150 aa)). Residues 69-71 (IAV), 77-82 (KKGFGK), and 111-117 (QLSLYQK) each bind CoA.

In terms of biological role, probable N-acetyltransferase. This is an uncharacterized protein from Bacillus subtilis (strain 168).